The primary structure comprises 151 residues: NAD(P)H-quinone oxidoreductase subunit N (151 aa).

It belongs to the complex I NdhN subunit family. As to quaternary structure, NDH-1 can be composed of about 15 different subunits; different subcomplexes with different compositions have been identified which probably have different functions.

The protein resides in the cellular thylakoid membrane. The enzyme catalyses a plastoquinone + NADH + (n+1) H(+)(in) = a plastoquinol + NAD(+) + n H(+)(out). The catalysed reaction is a plastoquinone + NADPH + (n+1) H(+)(in) = a plastoquinol + NADP(+) + n H(+)(out). NDH-1 shuttles electrons from an unknown electron donor, via FMN and iron-sulfur (Fe-S) centers, to quinones in the respiratory and/or the photosynthetic chain. The immediate electron acceptor for the enzyme in this species is believed to be plastoquinone. Couples the redox reaction to proton translocation, and thus conserves the redox energy in a proton gradient. Cyanobacterial NDH-1 also plays a role in inorganic carbon-concentration. The protein is NAD(P)H-quinone oxidoreductase subunit N of Acaryochloris marina (strain MBIC 11017).